The chain runs to 314 residues: Methionyl-tRNA formyltransferase (314 aa).

A (6S)-5,6,7,8-tetrahydrofolate-binding site is contributed by 110 to 113; sequence SLLP.

This sequence belongs to the Fmt family.

The catalysed reaction is L-methionyl-tRNA(fMet) + (6R)-10-formyltetrahydrofolate = N-formyl-L-methionyl-tRNA(fMet) + (6S)-5,6,7,8-tetrahydrofolate + H(+). Attaches a formyl group to the free amino group of methionyl-tRNA(fMet). The formyl group appears to play a dual role in the initiator identity of N-formylmethionyl-tRNA by promoting its recognition by IF2 and preventing the misappropriation of this tRNA by the elongation apparatus. The sequence is that of Methionyl-tRNA formyltransferase from Bacillus thuringiensis subsp. konkukian (strain 97-27).